The following is a 264-amino-acid chain: S-adenosylmethionine decarboxylase proenzyme (264 aa).

Catalysis depends on serine 113, which acts as the Schiff-base intermediate with substrate; via pyruvic acid. The residue at position 113 (serine 113) is a Pyruvic acid (Ser); by autocatalysis. Histidine 118 acts as the Proton acceptor; for processing activity in catalysis. The Proton donor; for catalytic activity role is filled by cysteine 141.

This sequence belongs to the prokaryotic AdoMetDC family. Type 2 subfamily. Heterooctamer of four alpha and four beta chains arranged as a tetramer of alpha/beta heterodimers. Pyruvate is required as a cofactor. Is synthesized initially as an inactive proenzyme. Formation of the active enzyme involves a self-maturation process in which the active site pyruvoyl group is generated from an internal serine residue via an autocatalytic post-translational modification. Two non-identical subunits are generated from the proenzyme in this reaction, and the pyruvate is formed at the N-terminus of the alpha chain, which is derived from the carboxyl end of the proenzyme. The post-translation cleavage follows an unusual pathway, termed non-hydrolytic serinolysis, in which the side chain hydroxyl group of the serine supplies its oxygen atom to form the C-terminus of the beta chain, while the remainder of the serine residue undergoes an oxidative deamination to produce ammonia and the pyruvoyl group blocking the N-terminus of the alpha chain.

The enzyme catalyses S-adenosyl-L-methionine + H(+) = S-adenosyl 3-(methylsulfanyl)propylamine + CO2. The protein operates within amine and polyamine biosynthesis; S-adenosylmethioninamine biosynthesis; S-adenosylmethioninamine from S-adenosyl-L-methionine: step 1/1. In terms of biological role, catalyzes the decarboxylation of S-adenosylmethionine to S-adenosylmethioninamine (dcAdoMet), the propylamine donor required for the synthesis of the polyamines spermine and spermidine from the diamine putrescine. The protein is S-adenosylmethionine decarboxylase proenzyme of Pseudomonas syringae pv. syringae (strain B728a).